Consider the following 1006-residue polypeptide: GATA zinc finger domain-containing protein 7 (1006 aa).

Over residues 55 to 70 the composition is skewed to low complexity; sequence SSSNNFINNHHNNQSS. 5 disordered regions span residues 55–116, 128–248, 381–499, 528–638, and 657–800; these read SSSN…APNL, PFQN…DPFY, NAKK…PLST, STSG…SSNS, and YNSN…NYHD. Positions 71 to 86 are enriched in polar residues; the sequence is DIHSISQSTPNLSTLI. 2 stretches are compositionally biased toward low complexity: residues 87–110 and 128–158; these read SSSS…NSSS and PFQN…CNNS. A compositionally biased stretch (polar residues) spans 159–168; sequence PVSSSTNYIP. A compositionally biased stretch (low complexity) spans 169–180; that stretch reads NNSTSNVVLNSS. Positions 181–190 are enriched in polar residues; sequence IPTTSPNVLS. 2 stretches are compositionally biased toward low complexity: residues 205-241 and 388-410; these read NNNN…NNNN and TNTN…NNNN. Residues 411-426 show a composition bias toward polar residues; that stretch reads IQQANVNTSPISTSTT. Low complexity-rich tracts occupy residues 427–456 and 468–496; these read PNNN…QQAQ and SITP…GASP. The segment covering 528–539 has biased composition (polar residues); sequence STSGMLSTTNPY. The span at 540-557 shows a compositional bias: low complexity; sequence THHSPNTSSTVSSSVTSP. A compositionally biased stretch (polar residues) spans 558 to 589; that stretch reads LINQYGTNPTLTNNHSFYGSLASNQNTGASDG. 2 stretches are compositionally biased toward low complexity: residues 590-601 and 619-638; these read NNNNNNNNNNNN and SSNP…SSNS. Polar residues predominate over residues 662–680; sequence GSGMTTPQSLGHSPSHNDY. Low complexity-rich tracts occupy residues 681-706 and 713-785; these read NSNN…NSNN and SNSS…SSNN. Residues 842–867 form a GATA-type zinc finger; it reads CHNCGTKNTPEWRRGPSGPATLCNAC. Positions 925–957 are disordered; it reads NNASSSSSSSSSSSSSSSSSSSTSSYSSSSYNI. The span at 928 to 954 shows a compositional bias: low complexity; it reads SSSSSSSSSSSSSSSSSSSTSSYSSSS.

This Dictyostelium discoideum (Social amoeba) protein is GATA zinc finger domain-containing protein 7 (gtaG).